A 3032-amino-acid polypeptide reads, in one-letter code: Compactin nonaketide synthase, polyketide synthase component (3032 aa).

The region spanning 8 to 447 (NEPIVVVGSG…GTNAHAIIEE (440 aa)) is the Ketosynthase family 3 (KS3) domain. Catalysis depends on for beta-ketoacyl synthase activity residues Cys181, His320, and His367. Residues 560–901 (VFTGQGAQWP…GYIWERFGVR (342 aa)) are acyl and malonyl transferase. The For malonyltransferase activity role is filled by Ser654. The N-terminal hotdog fold stretch occupies residues 953–1089 (HLLLGKLSSY…GQIVITLGEA (137 aa)). One can recognise a PKS/mFAS DH domain in the interval 953 to 1261 (HLLLGKLSSY…FKPFSPPTAS (309 aa)). His985 acts as the Proton acceptor; for dehydratase activity in catalysis. Residues 985 to 997 (HALQGQTVFPAAG) are dehydratase-like. Positions 1106-1261 (MNNVNIDFFY…FKPFSPPTAS (156 aa)) are C-terminal hotdog fold. Residue Asp1168 is the Proton donor; for dehydratase activity of the active site. The tract at residues 1506 to 1544 (YDLIIASDVLHASSNFEEKLAHIRSLLKPGGHLVTFGVT) is methyltransferase. The Carrier domain maps to 2441 to 2520 (DQVRQIVIDG…DLADDAATRL (80 aa)). Ser2480 carries the O-(pantetheine 4'-phosphoryl)serine modification. A disordered region spans residues 2531–2580 (IGDSTGTSDSGASPTPTDSHDEASSATSTDASSAEEDEEQEDDNEQGGRK). Residues 2532 to 2547 (GDSTGTSDSGASPTPT) show a composition bias toward low complexity. Acidic residues predominate over residues 2563 to 2575 (SAEEDEEQEDDNE). The interval 2586 to 2946 (RLSLGQEYSW…PKTQTHAPLF (361 aa)) is peptide synthetase elongation.

Pantetheine 4'-phosphate serves as cofactor.

It catalyses the reaction holo-[compactin nonaketide synthase] + 9 malonyl-CoA + 11 NADPH + 20 H(+) = dihydro-ML-236C-[compactin nonaketide synthase] + 9 CO2 + 11 NADP(+) + 9 CoA + 6 H2O. It participates in polyketide biosynthesis. Functionally, nonaketide synthase; part of the gene cluster that mediates the biosynthesis of compactin, also known as mevastatin or ML-236B, and which acts as a potent competitive inhibitor of HMG-CoA reductase. Compactin biosynthesis is performed in two stages. The first stage is catalyzed by the nonaketide synthase mlcA, which belongs to type I polyketide synthases and catalyzes the iterative nine-step formation of the polyketide. This PKS stage is completed by the action of dehydrogenase mlcG, which catalyzes the NADPH-dependent reduction of the unsaturated tetra-, penta- and heptaketide intermediates that arise during the mlcA-mediated biosynthesis of the nonaketide chain and leads to dihydro-ML-236C carboxylate. Covalently bound dihydro-ML-236C carboxylate is released from mlcA by the mlcF esterase. Conversion of dihydro-ML-236C carboxylate into ML-236A carboxylate is subsequently performed with the participation of molecular oxygen and P450 monoogygenase mlcC. Finally, mlcH performs the conversion of ML-236A carboxylate to ML-236B/compactin carboxylate through the addition of the side-chain diketide moiety produced by the diketide synthase mlcB. This chain is Compactin nonaketide synthase, polyketide synthase component, found in Penicillium citrinum.